The following is a 150-amino-acid chain: UPF0506 protein SJCHGC02380 (150 aa).

Positions methionine 1–serine 18 are cleaved as a signal peptide. N-linked (GlcNAc...) asparagine glycans are attached at residues asparagine 20, asparagine 24, asparagine 36, asparagine 48, asparagine 52, and asparagine 110. Intrachain disulfides connect cysteine 116-cysteine 130, cysteine 123-cysteine 134, and cysteine 129-cysteine 139.

Belongs to the UPF0506 family.

It localises to the secreted. This chain is UPF0506 protein SJCHGC02380, found in Schistosoma japonicum (Blood fluke).